Consider the following 406-residue polypeptide: NAC transcription factor NAM-B1 (406 aa).

Polar residues predominate over residues 1–11 (MGSPDSSSGSA). The interval 1–40 (MGSPDSSSGSAQKPPRHQHQHQPPPPRRQGSAPELPPGFR) is disordered. Residues 35–204 (LPPGFRFHPT…DWVLCRIYKK (170 aa)) form the NAC domain. The DNA-binding element occupies 137-210 (VGVKKALVFY…IYKKTSKAAA (74 aa)).

The protein localises to the nucleus. In terms of biological role, transcription factor of the NAC family associated with the grain protein content (GPC). Sequences of the 11 European varieties of H.vulgare tested belongs to the same haplotype while the sequence found in H.spontaneum, an ancestor of the cultivated H.vulgare which has a higher GPC, belongs to an other haplotype. The protein is NAC transcription factor NAM-B1 (NAM-B1) of Hordeum vulgare subsp. spontaneum (Wild barley).